Here is a 144-residue protein sequence, read N- to C-terminus: MDKLVPDVFKNKISDIIIEDDFDKENLVQETIACIEFDNFECKFECYKFQSSKSDSPESDISHNINIYTPIIYDYQNYQIDNSAVDILNQLNLKNNTFNRKMLFVLIHNFTMRVTDLCGYSIGLSEFNCDKIDKIKKKIQILVD.

The protein belongs to the mimivirus L885/R898 family.

This is an uncharacterized protein from Acanthamoeba polyphaga (Amoeba).